Reading from the N-terminus, the 368-residue chain is Propane 2-monooxygenase, hydroxylase component small subunit (368 aa).

Residues 1–17 (MSAPEKPRERSFPKIEF) are compositionally biased toward basic and acidic residues. Residues 1 to 32 (MSAPEKPRERSFPKIEFTDSEAGAKEFPSSKS) are disordered.

Belongs to the TmoE/XamoE family. As to quaternary structure, the propane 2-monooxygenase multicomponent enzyme system is composed of an electron transfer component and a monooxygenase component interacting with the effector protein MimD. The electron transfer component is composed of a reductase (MimB), and the monooxygenase component is formed by a large subunit (MimA) and a small subunit (MimC). Requires the presence of the chaperonin-like protein MimG to ensure a productive folding, resulting of a soluble MimC, which leads to the active form of MimABCD.

The enzyme catalyses propane + NADH + O2 + H(+) = propan-2-ol + NAD(+) + H2O. The catalysed reaction is acetone + NADH + O2 + H(+) = hydroxyacetone + NAD(+) + H2O. It carries out the reaction butan-2-one + NADH + O2 + H(+) = 1-hydroxy-2-butanone + NAD(+) + H2O. It catalyses the reaction phenol + NADH + O2 + H(+) = hydroquinone + NAD(+) + H2O. Its function is as follows. Component of the propane 2-monooxygenase multicomponent enzyme system which is involved in the degradation of propane via the O2-dependent hydroxylation of propane. Also involved in the degradation of acetone via the O2-dependent hydroxylation of acetone. Also able to catalyze the oxidation of phenol, methylethylketone (2-butanone), 1-propanol and 2-propanol. The chain is Propane 2-monooxygenase, hydroxylase component small subunit from Mycolicibacterium smegmatis (strain ATCC 700084 / mc(2)155) (Mycobacterium smegmatis).